A 378-amino-acid chain; its full sequence is Queuine tRNA-ribosyltransferase (378 aa).

Aspartate 91 functions as the Proton acceptor in the catalytic mechanism. Residues 91–95 (DSGGF), aspartate 145, glutamine 189, and glycine 216 each bind substrate. The segment at 247–253 (GVGKPED) is RNA binding. Aspartate 266 (nucleophile) is an active-site residue. The interval 271–275 (TRNAR) is RNA binding; important for wobble base 34 recognition. Positions 304, 306, 309, and 335 each coordinate Zn(2+).

This sequence belongs to the queuine tRNA-ribosyltransferase family. As to quaternary structure, homodimer. Within each dimer, one monomer is responsible for RNA recognition and catalysis, while the other monomer binds to the replacement base PreQ1. The cofactor is Zn(2+).

The enzyme catalyses 7-aminomethyl-7-carbaguanine + guanosine(34) in tRNA = 7-aminomethyl-7-carbaguanosine(34) in tRNA + guanine. Its pathway is tRNA modification; tRNA-queuosine biosynthesis. Functionally, catalyzes the base-exchange of a guanine (G) residue with the queuine precursor 7-aminomethyl-7-deazaguanine (PreQ1) at position 34 (anticodon wobble position) in tRNAs with GU(N) anticodons (tRNA-Asp, -Asn, -His and -Tyr). Catalysis occurs through a double-displacement mechanism. The nucleophile active site attacks the C1' of nucleotide 34 to detach the guanine base from the RNA, forming a covalent enzyme-RNA intermediate. The proton acceptor active site deprotonates the incoming PreQ1, allowing a nucleophilic attack on the C1' of the ribose to form the product. After dissociation, two additional enzymatic reactions on the tRNA convert PreQ1 to queuine (Q), resulting in the hypermodified nucleoside queuosine (7-(((4,5-cis-dihydroxy-2-cyclopenten-1-yl)amino)methyl)-7-deazaguanosine). The protein is Queuine tRNA-ribosyltransferase of Vibrio campbellii (strain ATCC BAA-1116).